Consider the following 918-residue polypeptide: Nitrate reductase [NADH] (918 aa).

Residues 25 to 44 (KNGPNHRADSPVRGCNFPNS) are disordered. Cys195 provides a ligand contact to Mo-molybdopterin. A Cytochrome b5 heme-binding domain is found at 543-618 (SNTYTLSEVK…LEDYRIGELI (76 aa)). Residues His578 and His601 each coordinate heme. Residues 661-774 (NEKIPCKLIS…KGPLGHIEYT (114 aa)) enclose the FAD-binding FR-type domain. FAD contacts are provided by residues 714-717 (RAYT), 731-735 (VVKVY), Phe736, Phe743, 748-750 (IMS), and Thr801.

The protein belongs to the nitrate reductase family. In terms of assembly, homodimer. FAD serves as cofactor. Heme is required as a cofactor. The cofactor is Mo-molybdopterin.

The enzyme catalyses nitrite + NAD(+) + H2O = nitrate + NADH + H(+). In terms of biological role, nitrate reductase is a key enzyme involved in the first step of nitrate assimilation in plants, fungi and bacteria. This chain is Nitrate reductase [NADH], found in Cucurbita maxima (Pumpkin).